We begin with the raw amino-acid sequence, 554 residues long: DnaJ homolog subfamily C member 1 (554 aa).

The signal sequence occupies residues 1-47 (MTAPCSQPAQLPGRRQLGLVPFPPPPPRTPLLWLLLLLLAAVAPARG). At 48–153 (WESGDLELFD…RRVRKMSNAE (106 aa)) the chain is on the lumenal side. Positions 65 to 129 (NFYQFLGVQQ…ERRQRYDDIL (65 aa)) constitute a J domain. The chain crosses the membrane as a helical span at residues 154 to 174 (LALLLFIILTVGHYAVVWSIY). Residues 175-554 (LEKQLDELLS…LVQKKKQAKS (380 aa)) lie on the Cytoplasmic side of the membrane. One can recognise an SANT 1 domain in the interval 325-379 (KQAPEWTEEDLSQLTRSMVKFPGGTPGRWEKIAHELGRSVTDVTTKAKQLKDSVT). S381 is modified (phosphoserine). The segment covering 392-405 (STVQNSRPIKTATT) has biased composition (polar residues). Positions 392 to 500 (STVQNSRPIK…RSAEEPWTQN (109 aa)) are disordered. Residues 421–432 (AAEEEQEGDSGE) are compositionally biased toward acidic residues. Residue S430 is modified to Phosphoserine. Positions 455 to 472 (AKPEPEEKSRAKRQKDFD) are enriched in basic and acidic residues. The span at 473 to 482 (IAEQNESSDE) shows a compositional bias: acidic residues. Phosphoserine occurs at positions 479, 480, 484, and 492. The segment covering 483–494 (ESLRKERARSAE) has biased composition (basic and acidic residues). An SANT 2 domain is found at 492–547 (SAEEPWTQNQQKLLELALQQYPRGSSDRWDKIARCVPSKSKEDCIARYKLLVELVQ).

Interacts (via J domain) with HSPA5. Interacts (via cytosolic domain) with ribosomes. Interacts (via SANT 2 domain) with SERPINA3; the interaction delays the formation of the covalent inhibitory complex SERPINA3-chymotrypsin, but does not alter the catalytic activity of SERPINA3. Interacts (via SANT 2 domain) with ITIH4 (via C-terminus); the interaction protects ITIH4 against in vitro cleavage by kallikrein.

The protein resides in the endoplasmic reticulum membrane. Its subcellular location is the nucleus membrane. It localises to the microsome membrane. May modulate protein synthesis. The sequence is that of DnaJ homolog subfamily C member 1 (DNAJC1) from Homo sapiens (Human).